The chain runs to 439 residues: Ornithine aminotransferase, mitochondrial (439 aa).

The N-terminal 25 residues, 1–25 (MLSKLARLQTVAGLGLGVHSSVASA), are a transit peptide targeting the mitochondrion. N6-acetyllysine is present on residues Lys49 and Lys66. Lys102 is modified (N6-succinyllysine). Lys107 is subject to N6-acetyllysine; alternate. Lys107 carries the N6-succinyllysine; alternate modification. An N6-(pyridoxal phosphate)lysine modification is found at Lys292. An N6-acetyllysine; alternate modification is found at Lys362. The residue at position 362 (Lys362) is an N6-succinyllysine; alternate. Residues Lys386 and Lys392 each carry the N6-acetyllysine modification. Lys405 is subject to N6-acetyllysine; alternate. Lys405 is modified (N6-succinyllysine; alternate). Position 421 is an N6-acetyllysine (Lys421).

This sequence belongs to the class-III pyridoxal-phosphate-dependent aminotransferase family. As to quaternary structure, homohexamer. It depends on pyridoxal 5'-phosphate as a cofactor.

It is found in the mitochondrion matrix. It catalyses the reaction L-ornithine + 2-oxoglutarate = L-glutamate 5-semialdehyde + L-glutamate. It participates in amino-acid biosynthesis; L-proline biosynthesis; L-glutamate 5-semialdehyde from L-ornithine: step 1/1. Its function is as follows. Catalyzes the reversible interconversion of L-ornithine and 2-oxoglutarate to L-glutamate semialdehyde and L-glutamate. This is Ornithine aminotransferase, mitochondrial (OAT) from Bos taurus (Bovine).